The primary structure comprises 181 residues: Large ribosomal subunit protein uL10 (181 aa).

This sequence belongs to the universal ribosomal protein uL10 family. In terms of assembly, part of the ribosomal stalk of the 50S ribosomal subunit. The N-terminus interacts with L11 and the large rRNA to form the base of the stalk. The C-terminus forms an elongated spine to which L12 dimers bind in a sequential fashion forming a multimeric L10(L12)X complex.

Forms part of the ribosomal stalk, playing a central role in the interaction of the ribosome with GTP-bound translation factors. The chain is Large ribosomal subunit protein uL10 from Amoebophilus asiaticus (strain 5a2).